We begin with the raw amino-acid sequence, 71 residues long: Delta-actitoxin-Avd2b 4 (71 aa).

Positions 1 to 20 are cleaved as a signal peptide; that stretch reads MMNRLLVFLMLGAFMLVVSA. Positions 21–41 are excised as a propeptide; sequence NDAYGDEPAFKDLNQGDESLG. 3 disulfides stabilise this stretch: C46–C61, C47–C55, and C49–C66.

Belongs to the sea anemone short toxin (type III) family.

It localises to the secreted. It is found in the nematocyst. In terms of biological role, voltage-gated sodium channel (Nav) inhibitor. 1 uM completely inhibits insect voltage-gated sodium channel inactivation (DmNav1 from D.melanogaster). The protein is Delta-actitoxin-Avd2b 4 of Anemonia viridis (Snakelocks anemone).